The following is a 459-amino-acid chain: Putrescine aminotransferase (459 aa).

Residues 150–151 (GT) and Gln274 contribute to the pyridoxal 5'-phosphate site. Lys300 is modified (N6-(pyridoxal phosphate)lysine). Pyridoxal 5'-phosphate is bound at residue Thr332.

The protein belongs to the class-III pyridoxal-phosphate-dependent aminotransferase family. Putrescine aminotransferase subfamily. The cofactor is pyridoxal 5'-phosphate.

The enzyme catalyses an alkane-alpha,omega-diamine + 2-oxoglutarate = an omega-aminoaldehyde + L-glutamate. The catalysed reaction is putrescine + 2-oxoglutarate = 1-pyrroline + L-glutamate + H2O. It catalyses the reaction cadaverine + 2-oxoglutarate = 5-aminopentanal + L-glutamate. It participates in amine and polyamine degradation; putrescine degradation; 4-aminobutanal from putrescine (transaminase route): step 1/1. In terms of biological role, catalyzes the aminotransferase reaction from putrescine to 2-oxoglutarate, leading to glutamate and 4-aminobutanal, which spontaneously cyclizes to form 1-pyrroline. This is the first step in one of two pathways for putrescine degradation, where putrescine is converted into 4-aminobutanoate (gamma-aminobutyrate or GABA) via 4-aminobutanal. Also functions as a cadaverine transaminase in a a L-lysine degradation pathway to succinate that proceeds via cadaverine, glutarate and L-2-hydroxyglutarate. The protein is Putrescine aminotransferase of Salmonella heidelberg (strain SL476).